Here is a 195-residue protein sequence, read N- to C-terminus: ATP-dependent Clp protease proteolytic subunit (195 aa).

The active-site Nucleophile is serine 102. Histidine 125 is an active-site residue.

The protein belongs to the peptidase S14 family. As to quaternary structure, component of the chloroplastic Clp protease core complex.

The protein resides in the plastid. It localises to the chloroplast stroma. It catalyses the reaction Hydrolysis of proteins to small peptides in the presence of ATP and magnesium. alpha-casein is the usual test substrate. In the absence of ATP, only oligopeptides shorter than five residues are hydrolyzed (such as succinyl-Leu-Tyr-|-NHMec, and Leu-Tyr-Leu-|-Tyr-Trp, in which cleavage of the -Tyr-|-Leu- and -Tyr-|-Trp bonds also occurs).. Its function is as follows. Cleaves peptides in various proteins in a process that requires ATP hydrolysis. Has a chymotrypsin-like activity. Plays a major role in the degradation of misfolded proteins. The polypeptide is ATP-dependent Clp protease proteolytic subunit (Phaseolus vulgaris (Kidney bean)).